The primary structure comprises 340 residues: Aspartate-semialdehyde dehydrogenase (340 aa).

NADP(+)-binding positions include Thr-11–Val-14 and Arg-39–Ser-40. Arg-100 lines the phosphate pocket. Cys-131 (acyl-thioester intermediate) is an active-site residue. Position 158 (Gln-158) interacts with substrate. Ser-161–Gly-162 contacts NADP(+). Residue Lys-216 participates in phosphate binding. Arg-238 is a binding site for substrate. Catalysis depends on His-245, which acts as the Proton acceptor. Asn-318 is an NADP(+) binding site.

The protein belongs to the aspartate-semialdehyde dehydrogenase family. Homodimer.

It carries out the reaction L-aspartate 4-semialdehyde + phosphate + NADP(+) = 4-phospho-L-aspartate + NADPH + H(+). It functions in the pathway amino-acid biosynthesis; L-lysine biosynthesis via DAP pathway; (S)-tetrahydrodipicolinate from L-aspartate: step 2/4. Its pathway is amino-acid biosynthesis; L-methionine biosynthesis via de novo pathway; L-homoserine from L-aspartate: step 2/3. The protein operates within amino-acid biosynthesis; L-threonine biosynthesis; L-threonine from L-aspartate: step 2/5. In terms of biological role, catalyzes the NADPH-dependent formation of L-aspartate-semialdehyde (L-ASA) by the reductive dephosphorylation of L-aspartyl-4-phosphate. This is Aspartate-semialdehyde dehydrogenase from Aquifex aeolicus (strain VF5).